The primary structure comprises 142 residues: Putative pre-16S rRNA nuclease (142 aa).

This sequence belongs to the YqgF nuclease family.

It is found in the cytoplasm. Could be a nuclease involved in processing of the 5'-end of pre-16S rRNA. This chain is Putative pre-16S rRNA nuclease, found in Staphylococcus aureus (strain bovine RF122 / ET3-1).